Reading from the N-terminus, the 632-residue chain is Chaperone protein DnaK (632 aa).

Phosphothreonine; by autocatalysis is present on T198. The segment at 599-632 (YKKAGASQQGAGSTTQSKKEEDVIEAEVEDKDNK) is disordered. Positions 604 to 614 (ASQQGAGSTTQ) are enriched in polar residues. Acidic residues predominate over residues 620 to 632 (DVIEAEVEDKDNK).

The protein belongs to the heat shock protein 70 family.

Acts as a chaperone. The sequence is that of Chaperone protein DnaK from Thermodesulfovibrio yellowstonii (strain ATCC 51303 / DSM 11347 / YP87).